Here is a 597-residue protein sequence, read N- to C-terminus: Zinc finger CCCH domain-containing protein 29 (597 aa).

2 ANK repeats span residues 76-106 (EERT…DVNR) and 111-143 (EKVT…SPNC). 2 consecutive C3H1-type zinc fingers follow at residues 254–281 (PYTC…HGVF) and 289–313 (QYRT…HRRD). The span at 320–337 (ASTGSAMVSPRSSNQSPE) shows a compositional bias: polar residues. The segment at 320–341 (ASTGSAMVSPRSSNQSPEMSVM) is disordered.

In terms of tissue distribution, expressed in roots and anthers.

Its subcellular location is the nucleus. Involved in salt stress response. May positively modulate plant tolerance to salt stress. In Arabidopsis thaliana (Mouse-ear cress), this protein is Zinc finger CCCH domain-containing protein 29.